The chain runs to 208 residues: High frequency lysogenization protein HflD homolog (208 aa).

The protein belongs to the HflD family.

Its subcellular location is the cytoplasm. The protein localises to the cell inner membrane. The sequence is that of High frequency lysogenization protein HflD homolog from Yersinia enterocolitica serotype O:8 / biotype 1B (strain NCTC 13174 / 8081).